A 439-amino-acid chain; its full sequence is D-inositol 3-phosphate glycosyltransferase (439 aa).

His-21 is a 1D-myo-inositol 3-phosphate binding site. UDP-N-acetyl-alpha-D-glucosamine contacts are provided by residues 27–28 (QP) and Gly-35. 1D-myo-inositol 3-phosphate contacts are provided by residues 32–37 (DAGGMN), Lys-90, Tyr-123, Thr-147, and Arg-167. UDP-N-acetyl-alpha-D-glucosamine is bound by residues Arg-241, Lys-246, and Gln-299. 3 residues coordinate Mg(2+): Tyr-308, Arg-309, and Ala-311. UDP-N-acetyl-alpha-D-glucosamine-binding residues include Glu-321 and Glu-329. Thr-335 contributes to the Mg(2+) binding site.

It belongs to the glycosyltransferase group 1 family. MshA subfamily. Homodimer.

The enzyme catalyses 1D-myo-inositol 3-phosphate + UDP-N-acetyl-alpha-D-glucosamine = 1D-myo-inositol 2-acetamido-2-deoxy-alpha-D-glucopyranoside 3-phosphate + UDP + H(+). Functionally, catalyzes the transfer of a N-acetyl-glucosamine moiety to 1D-myo-inositol 3-phosphate to produce 1D-myo-inositol 2-acetamido-2-deoxy-glucopyranoside 3-phosphate in the mycothiol biosynthesis pathway. The protein is D-inositol 3-phosphate glycosyltransferase of Mycobacterium sp. (strain JLS).